Consider the following 848-residue polypeptide: Neuroligin-3 (848 aa).

Positions 1 to 37 are cleaved as a signal peptide; that stretch reads MWLRLGPPSLSLSPKPTVGRSLCLTLWFLSLALRAST. At 38–709 the chain is on the extracellular side; sequence QAPAPTVNTH…NPRDYSTELS (672 aa). A glycan (N-linked (GlcNAc...) asparagine) is linked at Asn98. Cys106 and Cys141 are joined by a disulfide. Positions 170 to 195 are disordered; sequence RKGGSGAKKQGEDLADNDGDEDEDIR. Residues 182-194 show a composition bias toward acidic residues; that stretch reads DLADNDGDEDEDI. Disulfide bonds link Cys340–Cys351 and Cys510–Cys544. Asn545 is a glycosylation site (N-linked (GlcNAc...) asparagine). 2 stretches are compositionally biased toward polar residues: residues 645-656 and 677-689; these read TKVPPPDTTHSS and AYSN…SWNG. The interval 645–694 is disordered; it reads TKVPPPDTTHSSHITRRPNGKTWSTKRPAISPAYSNENAQGSWNGDQDAG. Residues 710–730 form a helical membrane-spanning segment; that stretch reads VTIAVGASLLFLNVLAFAALY. Residues 731–848 are Cytoplasmic-facing; sequence YRKDKRRQEP…LPHSHSTTRV (118 aa). At Ser745 the chain carries Phosphoserine. Phosphotyrosine is present on Tyr792.

It belongs to the type-B carboxylesterase/lipase family. As to quaternary structure, homodimer, and heterodimer with NLGN1 and NLGN2. Interacts with neurexins NRXN1, NRXN2 and NRXN3. Interaction with neurexins is mediated by heparan sulfate glycan modification on neurexin. Interacts (via its C-terminus) with DLG4/PSD-95 (via PDZ domain 3). Expressed in the blood vessel walls (at protein level). Detected in throughout the brain and in spinal cord. Detected in brain, and at lower levels in pancreas islet beta cells.

It is found in the cell membrane. It localises to the synapse. Functionally, cell surface protein involved in cell-cell-interactions via its interactions with neurexin family members. Plays a role in synapse function and synaptic signal transmission, and may mediate its effects by clustering other synaptic proteins. May promote the initial formation of synapses, but is not essential for this. May also play a role in glia-glia or glia-neuron interactions in the developing peripheral nervous system. In Homo sapiens (Human), this protein is Neuroligin-3 (NLGN3).